The primary structure comprises 298 residues: Acetyl-coenzyme A carboxylase carboxyl transferase subunit beta (298 aa).

Residues 1-21 form a disordered region; sequence MNQEVKSGKVLSPSTPWTQRP. One can recognise a CoA carboxyltransferase N-terminal domain in the interval 41-298; sequence PTIECPECHA…RLVSKLMNLP (258 aa). Residues C45, C48, C64, and C67 each coordinate Zn(2+). The segment at 45-67 adopts a C4-type zinc-finger fold; that stretch reads CPECHALVTRTAISFNAYVCPQC.

Belongs to the AccD/PCCB family. Acetyl-CoA carboxylase is a heterohexamer composed of biotin carboxyl carrier protein (AccB), biotin carboxylase (AccC) and two subunits each of ACCase subunit alpha (AccA) and ACCase subunit beta (AccD). Zn(2+) is required as a cofactor.

Its subcellular location is the cytoplasm. It catalyses the reaction N(6)-carboxybiotinyl-L-lysyl-[protein] + acetyl-CoA = N(6)-biotinyl-L-lysyl-[protein] + malonyl-CoA. The protein operates within lipid metabolism; malonyl-CoA biosynthesis; malonyl-CoA from acetyl-CoA: step 1/1. In terms of biological role, component of the acetyl coenzyme A carboxylase (ACC) complex. Biotin carboxylase (BC) catalyzes the carboxylation of biotin on its carrier protein (BCCP) and then the CO(2) group is transferred by the transcarboxylase to acetyl-CoA to form malonyl-CoA. This chain is Acetyl-coenzyme A carboxylase carboxyl transferase subunit beta, found in Acinetobacter baumannii (strain AYE).